A 385-amino-acid polypeptide reads, in one-letter code: Putative transport protein MT1133 (385 aa).

8 helical membrane-spanning segments follow: residues 7 to 27 (LTQKRALAILTLIALLFGAYF), 32 to 52 (FVLIVVAAVGAYLFTPLFKWF), 66 to 86 (LLSALAAVVVPVGALVGLAIV), 159 to 179 (SLAGVITSAIIFVYVFVALLV), 218 to 238 (FVIAACQGVAGAASIYIAGFH), 241 to 261 (FFIFAIVLTALSIIPLGGGIV), 263 to 283 (IPFGIGMIFYGNIAGGIFVLL), and 319 to 339 (GITMFGPWGIIIGPVLMILIV).

Belongs to the autoinducer-2 exporter (AI-2E) (TC 2.A.86) family.

The protein localises to the cell membrane. The sequence is that of Putative transport protein MT1133 from Mycobacterium tuberculosis (strain CDC 1551 / Oshkosh).